The following is a 386-amino-acid chain: Erythronate-4-phosphate dehydrogenase (386 aa).

The substrate site is built by Ser59 and Thr81. An NAD(+)-binding site is contributed by Asp162. The active site involves Arg239. Asp262 is a binding site for NAD(+). Glu267 is an active-site residue. The active-site Proton donor is the His284. NAD(+) is bound at residue Gly287. Tyr288 is a binding site for substrate.

The protein belongs to the D-isomer specific 2-hydroxyacid dehydrogenase family. PdxB subfamily. Homodimer.

The protein localises to the cytoplasm. It catalyses the reaction 4-phospho-D-erythronate + NAD(+) = (R)-3-hydroxy-2-oxo-4-phosphooxybutanoate + NADH + H(+). Its pathway is cofactor biosynthesis; pyridoxine 5'-phosphate biosynthesis; pyridoxine 5'-phosphate from D-erythrose 4-phosphate: step 2/5. Catalyzes the oxidation of erythronate-4-phosphate to 3-hydroxy-2-oxo-4-phosphonooxybutanoate. The polypeptide is Erythronate-4-phosphate dehydrogenase (Psychrobacter cryohalolentis (strain ATCC BAA-1226 / DSM 17306 / VKM B-2378 / K5)).